Reading from the N-terminus, the 390-residue chain is GTPase Obg (390 aa).

The region spanning 1–159 (MKFVDEASIL…RELLLELMLL (159 aa)) is the Obg domain. The interval 127 to 147 (NTRFKSSVNRTPRQKTNGTPG) is disordered. Polar residues predominate over residues 129 to 145 (RFKSSVNRTPRQKTNGT). In terms of domain architecture, OBG-type G spans 160 to 333 (ADVGMLGMPN…LCWDVMTFII (174 aa)). GTP-binding positions include 166-173 (GMPNAGKS), 191-195 (FTTLV), 213-216 (DIPG), 283-286 (NKID), and 314-316 (SAA). The Mg(2+) site is built by Ser173 and Thr193.

The protein belongs to the TRAFAC class OBG-HflX-like GTPase superfamily. OBG GTPase family. Monomer. It depends on Mg(2+) as a cofactor.

The protein resides in the cytoplasm. An essential GTPase which binds GTP, GDP and possibly (p)ppGpp with moderate affinity, with high nucleotide exchange rates and a fairly low GTP hydrolysis rate. Plays a role in control of the cell cycle, stress response, ribosome biogenesis and in those bacteria that undergo differentiation, in morphogenesis control. The sequence is that of GTPase Obg from Escherichia fergusonii (strain ATCC 35469 / DSM 13698 / CCUG 18766 / IAM 14443 / JCM 21226 / LMG 7866 / NBRC 102419 / NCTC 12128 / CDC 0568-73).